The following is a 291-amino-acid chain: Beta-lactamase CTX-M-25 (291 aa).

Residues 1–30 (MMRKSVRRAMLMTTACVSLLLASVPLCAQA) form the signal peptide. The active-site Nucleophile; acyl-ester intermediate is the S73. 4 residues coordinate a beta-lactam: K76, S133, E169, and S240.

The protein belongs to the class-A beta-lactamase family. As to quaternary structure, monomer.

The protein localises to the secreted. It catalyses the reaction a beta-lactam + H2O = a substituted beta-amino acid. Its activity is regulated as follows. Inhibited by the beta-lactamase-blocking agents clavulanic acid and tazobactam; in the DH10B strain. Functionally, extended-spectrum beta-lactamase (ESBL) which confers resistance to penicillins, as well as first, second and third-generation cephalosporins. Has cefotaxime-hydrolyzing activity. Inactive against cephalosporin antibiotic, cefoxitin, and the carbapenem, imipenem. The polypeptide is Beta-lactamase CTX-M-25 (Escherichia coli).